The sequence spans 296 residues: GTPase Era (296 aa).

The 168-residue stretch at 3–170 (KSGFVTIVGR…KELMFKYIPE (168 aa)) folds into the Era-type G domain. Residues 11–18 (GRPNVGKS) form a G1 region. 11–18 (GRPNVGKS) is a binding site for GTP. The G2 stretch occupies residues 37-41 (QTTRN). The G3 stretch occupies residues 58-61 (DTPG). Residues 58 to 62 (DTPGI) and 120 to 123 (NKID) contribute to the GTP site. Residues 120-123 (NKID) form a G4 region. The tract at residues 149 to 151 (ISA) is G5. Residues 201-278 (LSEEVPHGIA…YIRLWVKVKE (78 aa)) form the KH type-2 domain.

It belongs to the TRAFAC class TrmE-Era-EngA-EngB-Septin-like GTPase superfamily. Era GTPase family. Monomer.

It localises to the cytoplasm. It is found in the cell membrane. Its function is as follows. An essential GTPase that binds both GDP and GTP, with rapid nucleotide exchange. Plays a role in 16S rRNA processing and 30S ribosomal subunit biogenesis and possibly also in cell cycle regulation and energy metabolism. In Clostridium botulinum (strain ATCC 19397 / Type A), this protein is GTPase Era.